Consider the following 479-residue polypeptide: Dynein regulatory complex subunit 4 (479 aa).

3 coiled-coil regions span residues 28-93 (RDQL…LADI), 117-170 (RAEA…FNEK), and 210-347 (EVEE…GLKE).

The protein belongs to the DRC4 family.

Its subcellular location is the cytoplasm. It is found in the cytoskeleton. The protein resides in the flagellum basal body. Cytoskeletal linker which probably functions in axonemal and non-axonemal dynein regulation. May play a role in the spermatozoa motility. The protein is Dynein regulatory complex subunit 4 of Drosophila melanogaster (Fruit fly).